Here is a 100-residue protein sequence, read N- to C-terminus: NADH-quinone oxidoreductase subunit K (100 aa).

A run of 3 helical transmembrane segments spans residues Ile2–Val22, Leu29–Ile49, and Phe63–Leu83.

This sequence belongs to the complex I subunit 4L family. As to quaternary structure, NDH-1 is composed of 14 different subunits. Subunits NuoA, H, J, K, L, M, N constitute the membrane sector of the complex.

It localises to the cell inner membrane. The enzyme catalyses a quinone + NADH + 5 H(+)(in) = a quinol + NAD(+) + 4 H(+)(out). In terms of biological role, NDH-1 shuttles electrons from NADH, via FMN and iron-sulfur (Fe-S) centers, to quinones in the respiratory chain. The immediate electron acceptor for the enzyme in this species is believed to be ubiquinone. Couples the redox reaction to proton translocation (for every two electrons transferred, four hydrogen ions are translocated across the cytoplasmic membrane), and thus conserves the redox energy in a proton gradient. In Sulfurovum sp. (strain NBC37-1), this protein is NADH-quinone oxidoreductase subunit K.